The sequence spans 104 residues: Replication restart protein PriB (104 aa).

In terms of domain architecture, SSB spans 1–101 (MTNRLTLSGT…LHAEQIELID (101 aa)).

It belongs to the PriB family. Homodimer. Interacts with PriA and DnaT. Component of the replication restart primosome. Primosome assembly occurs via a 'hand-off' mechanism. PriA binds to replication forks, subsequently PriB then DnaT bind; DnaT then displaces ssDNA to generate the helicase loading substrate.

In terms of biological role, involved in the restart of stalled replication forks, which reloads the replicative helicase on sites other than the origin of replication; the PriA-PriB pathway is the major replication restart pathway. During primosome assembly it facilitates complex formation between PriA and DnaT on DNA; stabilizes PriA on DNA. Stimulates the DNA unwinding activity of PriA helicase. The protein is Replication restart protein PriB of Salmonella typhi.